The chain runs to 388 residues: Formate-dependent phosphoribosylglycinamide formyltransferase (388 aa).

Residues 15-16 and E75 contribute to the N(1)-(5-phospho-beta-D-ribosyl)glycinamide site; that span reads EL. Residues R107, K148, 153 to 158, 188 to 191, and E196 contribute to the ATP site; these read SSGKGQ and EEFL. The ATP-grasp domain maps to 112-302; the sequence is DLASAELALL…EFELHLRAVL (191 aa). Mg(2+)-binding residues include E261 and E273. N(1)-(5-phospho-beta-D-ribosyl)glycinamide contacts are provided by residues D280, K350, and 357–358; that span reads RR.

The protein belongs to the PurK/PurT family. In terms of assembly, homodimer.

It catalyses the reaction N(1)-(5-phospho-beta-D-ribosyl)glycinamide + formate + ATP = N(2)-formyl-N(1)-(5-phospho-beta-D-ribosyl)glycinamide + ADP + phosphate + H(+). It functions in the pathway purine metabolism; IMP biosynthesis via de novo pathway; N(2)-formyl-N(1)-(5-phospho-D-ribosyl)glycinamide from N(1)-(5-phospho-D-ribosyl)glycinamide (formate route): step 1/1. Involved in the de novo purine biosynthesis. Catalyzes the transfer of formate to 5-phospho-ribosyl-glycinamide (GAR), producing 5-phospho-ribosyl-N-formylglycinamide (FGAR). Formate is provided by PurU via hydrolysis of 10-formyl-tetrahydrofolate. The protein is Formate-dependent phosphoribosylglycinamide formyltransferase of Prochlorococcus marinus (strain MIT 9313).